Here is a 788-residue protein sequence, read N- to C-terminus: Putative wall-associated receptor kinase-like 11 (788 aa).

Positions 1 to 27 are cleaved as a signal peptide; sequence MRCDNNYSFSILFSLLLILILDSKVVS. Topologically, residues 28–375 are extracellular; sequence LSTSCQSKSV…TFNCIGNKTR (348 aa). N-linked (GlcNAc...) asparagine glycans are attached at residues asparagine 65, asparagine 80, asparagine 121, asparagine 159, asparagine 233, asparagine 253, asparagine 278, asparagine 295, and asparagine 310. An atypical EGF-like region spans residues 306–369; sequence CICNNVTISG…CVNLPGTFNC (64 aa). Cystine bridges form between cysteine 308–cysteine 321, cysteine 343–cysteine 360, and cysteine 354–cysteine 369. Residue asparagine 372 is glycosylated (N-linked (GlcNAc...) asparagine). The helical transmembrane segment at 376 to 396 threads the bilayer; it reads VTMIGVGSAFGILVLVVGIWW. At 397-788 the chain is on the cytoplasmic side; the sequence is LRKFLKKRRM…QPLFPHPTWI (392 aa). Positions 451–726 constitute a Protein kinase domain; sequence FSESRILGQG…KVFTDLEKIL (276 aa). Residues 457 to 465 and lysine 479 each bind ATP; that span reads LGQGGQGTV. Tyrosine 524 is subject to Phosphotyrosine. Aspartate 576 serves as the catalytic Proton acceptor. 2 positions are modified to phosphothreonine: threonine 610 and threonine 615. Tyrosine 623 carries the post-translational modification Phosphotyrosine.

It belongs to the protein kinase superfamily. Ser/Thr protein kinase family.

Its subcellular location is the membrane. It catalyses the reaction L-seryl-[protein] + ATP = O-phospho-L-seryl-[protein] + ADP + H(+). It carries out the reaction L-threonyl-[protein] + ATP = O-phospho-L-threonyl-[protein] + ADP + H(+). Putative serine/threonine-protein kinase that may function as a signaling receptor of extracellular matrix component. This Arabidopsis thaliana (Mouse-ear cress) protein is Putative wall-associated receptor kinase-like 11 (WAKL11).